Consider the following 226-residue polypeptide: ATP synthase F(0) complex subunit a (226 aa).

The next 6 membrane-spanning stretches (helical) occupy residues 11–31 (APTILGQPATIPIIMFPTLLI), 68–88 (WSLMLMSLITFITMTNLLGLL), 97–117 (QLSMNLAMAIPLWAGTIITGL), 138–158 (IPMLVMIETISLLIQPMALAV), 164–184 (ITAGHLLMHLIGNTMLTLSTI), and 194–214 (VLLMLLTILEIAVALIQAYVF).

Belongs to the ATPase A chain family. In terms of assembly, component of the ATP synthase complex composed at least of ATP5F1A/subunit alpha, ATP5F1B/subunit beta, ATP5MC1/subunit c (homooctomer), MT-ATP6/subunit a, MT-ATP8/subunit 8, ATP5ME/subunit e, ATP5MF/subunit f, ATP5MG/subunit g, ATP5MK/subunit k, ATP5MJ/subunit j, ATP5F1C/subunit gamma, ATP5F1D/subunit delta, ATP5F1E/subunit epsilon, ATP5PF/subunit F6, ATP5PB/subunit b, ATP5PD/subunit d, ATP5PO/subunit OSCP. ATP synthase complex consists of a soluble F(1) head domain (subunits alpha(3) and beta(3)) - the catalytic core - and a membrane F(0) domain - the membrane proton channel (subunits c, a, 8, e, f, g, k and j). These two domains are linked by a central stalk (subunits gamma, delta, and epsilon) rotating inside the F1 region and a stationary peripheral stalk (subunits F6, b, d, and OSCP). Interacts with DNAJC30; interaction is direct.

It is found in the mitochondrion inner membrane. It carries out the reaction H(+)(in) = H(+)(out). Its function is as follows. Subunit a, of the mitochondrial membrane ATP synthase complex (F(1)F(0) ATP synthase or Complex V) that produces ATP from ADP in the presence of a proton gradient across the membrane which is generated by electron transport complexes of the respiratory chain. ATP synthase complex consist of a soluble F(1) head domain - the catalytic core - and a membrane F(1) domain - the membrane proton channel. These two domains are linked by a central stalk rotating inside the F(1) region and a stationary peripheral stalk. During catalysis, ATP synthesis in the catalytic domain of F(1) is coupled via a rotary mechanism of the central stalk subunits to proton translocation. With the subunit c (ATP5MC1), forms the proton-conducting channel in the F(0) domain, that contains two crucial half-channels (inlet and outlet) that facilitate proton movement from the mitochondrial intermembrane space (IMS) into the matrix. Protons are taken up via the inlet half-channel and released through the outlet half-channel, following a Grotthuss mechanism. The protein is ATP synthase F(0) complex subunit a of Papio hamadryas (Hamadryas baboon).